Reading from the N-terminus, the 155-residue chain is dCTP deaminase (155 aa).

DCTP-binding positions include 79-84 (RSSLAR), Asp95, Gln124, and Tyr138.

The protein belongs to the dCTP deaminase family. As to quaternary structure, homotrimer.

It carries out the reaction dCTP + H2O + H(+) = dUTP + NH4(+). The protein operates within pyrimidine metabolism; dUMP biosynthesis; dUMP from dCTP (dUTP route): step 1/2. Its function is as follows. Catalyzes the deamination of dCTP to dUTP. The chain is dCTP deaminase from Thermococcus kodakarensis (strain ATCC BAA-918 / JCM 12380 / KOD1) (Pyrococcus kodakaraensis (strain KOD1)).